Reading from the N-terminus, the 197-residue chain is Small ribosomal subunit protein eS1 (197 aa).

Belongs to the eukaryotic ribosomal protein eS1 family.

In Methanoculleus marisnigri (strain ATCC 35101 / DSM 1498 / JR1), this protein is Small ribosomal subunit protein eS1.